Consider the following 154-residue polypeptide: Ribonuclease H (154 aa).

The RNase H type-1 domain occupies 1–142 (MLKHIDLYTD…CDELARDAAS (142 aa)). 4 residues coordinate Mg(2+): D10, E48, D70, and D134. Residues 126-147 (GHPENERCDELARDAASGKELA) show a composition bias toward basic and acidic residues. Residues 126–154 (GHPENERCDELARDAASGKELAEDTGYQP) are disordered.

Belongs to the RNase H family. As to quaternary structure, monomer. It depends on Mg(2+) as a cofactor.

The protein localises to the cytoplasm. It carries out the reaction Endonucleolytic cleavage to 5'-phosphomonoester.. Its function is as follows. Endonuclease that specifically degrades the RNA of RNA-DNA hybrids. The chain is Ribonuclease H from Aeromonas salmonicida (strain A449).